The sequence spans 163 residues: Nucleotide-binding protein CKO_02735 (163 aa).

It belongs to the YajQ family.

Functionally, nucleotide-binding protein. The chain is Nucleotide-binding protein CKO_02735 from Citrobacter koseri (strain ATCC BAA-895 / CDC 4225-83 / SGSC4696).